The following is a 398-amino-acid chain: uncharacterized protein (398 aa).

The next 2 membrane-spanning stretches (helical) occupy residues Val31–Phe51 and Ala56–Cys76.

The protein belongs to the chlamydial CPn_0129/CT_036/TC_0306 family.

Its subcellular location is the cell membrane. This is an uncharacterized protein from Chlamydia muridarum (strain MoPn / Nigg).